Consider the following 417-residue polypeptide: Serine hydroxymethyltransferase 1 (417 aa).

Residues leucine 121 and 125–127 (GHL) contribute to the (6S)-5,6,7,8-tetrahydrofolate site. Residue lysine 230 is modified to N6-(pyridoxal phosphate)lysine. (6S)-5,6,7,8-tetrahydrofolate is bound at residue 355–357 (SPF).

The protein belongs to the SHMT family. Homodimer. Pyridoxal 5'-phosphate is required as a cofactor.

The protein resides in the cytoplasm. The enzyme catalyses (6R)-5,10-methylene-5,6,7,8-tetrahydrofolate + glycine + H2O = (6S)-5,6,7,8-tetrahydrofolate + L-serine. The protein operates within one-carbon metabolism; tetrahydrofolate interconversion. It functions in the pathway amino-acid biosynthesis; glycine biosynthesis; glycine from L-serine: step 1/1. In terms of biological role, catalyzes the reversible interconversion of serine and glycine with tetrahydrofolate (THF) serving as the one-carbon carrier. This reaction serves as the major source of one-carbon groups required for the biosynthesis of purines, thymidylate, methionine, and other important biomolecules. Also exhibits THF-independent aldolase activity toward beta-hydroxyamino acids, producing glycine and aldehydes, via a retro-aldol mechanism. The chain is Serine hydroxymethyltransferase 1 from Pseudomonas putida (strain ATCC 47054 / DSM 6125 / CFBP 8728 / NCIMB 11950 / KT2440).